Reading from the N-terminus, the 196-residue chain is Cell division protein SepF (196 aa).

The segment at valine 15–lysine 80 is disordered. The span at proline 57 to lysine 72 shows a compositional bias: low complexity.

The protein belongs to the SepF family. In terms of assembly, homodimer. Interacts with FtsZ.

The protein resides in the cytoplasm. Cell division protein that is part of the divisome complex and is recruited early to the Z-ring. Probably stimulates Z-ring formation, perhaps through the cross-linking of FtsZ protofilaments. Its function overlaps with FtsA. This is Cell division protein SepF from Lactococcus lactis subsp. cremoris (strain MG1363).